Reading from the N-terminus, the 282-residue chain is Nucleotide-binding protein XCV3122 (282 aa).

Residue 5–12 (GLSGSGKS) coordinates ATP. 57-60 (DVRS) lines the GTP pocket.

This sequence belongs to the RapZ-like family.

In terms of biological role, displays ATPase and GTPase activities. This chain is Nucleotide-binding protein XCV3122, found in Xanthomonas euvesicatoria pv. vesicatoria (strain 85-10) (Xanthomonas campestris pv. vesicatoria).